The primary structure comprises 62 residues: uncharacterized protein (62 aa).

A compositionally biased stretch (polar residues) spans 1–18; the sequence is MTTNRVDPLEQTSPNTPT. Positions 1-24 are disordered; sequence MTTNRVDPLEQTSPNTPTSKREKA.

This is an uncharacterized protein from Rickettsia conorii (strain ATCC VR-613 / Malish 7).